The chain runs to 406 residues: 3-phosphoshikimate 1-carboxyvinyltransferase (406 aa).

K20, S21, and R25 together coordinate 3-phosphoshikimate. K20 serves as a coordination point for phosphoenolpyruvate. G84 and R112 together coordinate phosphoenolpyruvate. 3-phosphoshikimate-binding residues include S155, S156, Q157, D295, Q317, and K321. Q157 is a binding site for phosphoenolpyruvate. Catalysis depends on D295, which acts as the Proton acceptor. 3 residues coordinate phosphoenolpyruvate: R325, R366, and K392.

It belongs to the EPSP synthase family. As to quaternary structure, monomer.

The protein resides in the cytoplasm. It carries out the reaction 3-phosphoshikimate + phosphoenolpyruvate = 5-O-(1-carboxyvinyl)-3-phosphoshikimate + phosphate. It participates in metabolic intermediate biosynthesis; chorismate biosynthesis. Its function is as follows. Catalyzes the transfer of the enolpyruvyl moiety of phosphoenolpyruvate (PEP) to the 5-hydroxyl of shikimate-3-phosphate (S3P) to produce enolpyruvyl shikimate-3-phosphate and inorganic phosphate. The protein is 3-phosphoshikimate 1-carboxyvinyltransferase of Pyrococcus furiosus (strain ATCC 43587 / DSM 3638 / JCM 8422 / Vc1).